We begin with the raw amino-acid sequence, 361 residues long: DNA replication and repair protein RecF (361 aa).

30–37 (GPNGSGKT) serves as a coordination point for ATP.

It belongs to the RecF family.

It localises to the cytoplasm. In terms of biological role, the RecF protein is involved in DNA metabolism; it is required for DNA replication and normal SOS inducibility. RecF binds preferentially to single-stranded, linear DNA. It also seems to bind ATP. The polypeptide is DNA replication and repair protein RecF (Erwinia tasmaniensis (strain DSM 17950 / CFBP 7177 / CIP 109463 / NCPPB 4357 / Et1/99)).